Here is a 92-residue protein sequence, read N- to C-terminus: N(2)-fixation sustaining protein CowN (92 aa).

This sequence belongs to the CowN family.

In terms of biological role, is required to sustain N(2)-dependent growth in the presence of low levels of carbon monoxide (CO). Probably acts by protecting the N(2) fixation ability of the nitrogenase complex, which is inactivated in the presence of CO. This chain is N(2)-fixation sustaining protein CowN, found in Rhodopseudomonas palustris (strain ATCC BAA-98 / CGA009).